A 205-amino-acid chain; its full sequence is Outer-membrane lipoprotein carrier protein (205 aa).

Positions 1-21 (MKKIVLLVTLVFSINYSFANA) are cleaved as a signal peptide.

Belongs to the LolA family. Monomer.

It localises to the periplasm. Participates in the translocation of lipoproteins from the inner membrane to the outer membrane. Only forms a complex with a lipoprotein if the residue after the N-terminal Cys is not an aspartate (The Asp acts as a targeting signal to indicate that the lipoprotein should stay in the inner membrane). The chain is Outer-membrane lipoprotein carrier protein from Francisella philomiragia subsp. philomiragia (strain ATCC 25017 / CCUG 19701 / FSC 153 / O#319-036).